Reading from the N-terminus, the 187-residue chain is UPF0301 protein Pcryo_0062 (187 aa).

This sequence belongs to the UPF0301 (AlgH) family.

This is UPF0301 protein Pcryo_0062 from Psychrobacter cryohalolentis (strain ATCC BAA-1226 / DSM 17306 / VKM B-2378 / K5).